The sequence spans 425 residues: 3-phosphoshikimate 1-carboxyvinyltransferase (425 aa).

K22, S23, and R27 together coordinate 3-phosphoshikimate. K22 lines the phosphoenolpyruvate pocket. Phosphoenolpyruvate-binding residues include G95 and R123. 3-phosphoshikimate contacts are provided by S169, S170, Q171, S197, D313, N336, and K340. Residue Q171 coordinates phosphoenolpyruvate. The Proton acceptor role is filled by D313. 3 residues coordinate phosphoenolpyruvate: R344, R386, and K411.

Belongs to the EPSP synthase family. Monomer.

It localises to the cytoplasm. It catalyses the reaction 3-phosphoshikimate + phosphoenolpyruvate = 5-O-(1-carboxyvinyl)-3-phosphoshikimate + phosphate. The protein operates within metabolic intermediate biosynthesis; chorismate biosynthesis; chorismate from D-erythrose 4-phosphate and phosphoenolpyruvate: step 6/7. Its function is as follows. Catalyzes the transfer of the enolpyruvyl moiety of phosphoenolpyruvate (PEP) to the 5-hydroxyl of shikimate-3-phosphate (S3P) to produce enolpyruvyl shikimate-3-phosphate and inorganic phosphate. The polypeptide is 3-phosphoshikimate 1-carboxyvinyltransferase (Marinomonas sp. (strain MWYL1)).